The sequence spans 144 residues: Putative pre-16S rRNA nuclease (144 aa).

The protein belongs to the YqgF nuclease family.

It is found in the cytoplasm. Functionally, could be a nuclease involved in processing of the 5'-end of pre-16S rRNA. In Pseudomonas aeruginosa (strain LESB58), this protein is Putative pre-16S rRNA nuclease.